A 97-amino-acid polypeptide reads, in one-letter code: ESAT-6-like protein EsxG (97 aa).

Belongs to the WXG100 family. CFP-10 subfamily. As to quaternary structure, forms a tight 1:1 complex with EsxH.

It localises to the secreted. This chain is ESAT-6-like protein EsxG, found in Mycolicibacterium smegmatis (strain ATCC 700084 / mc(2)155) (Mycobacterium smegmatis).